The sequence spans 175 residues: MLLSTSFLLAGHFGFNTNLLETNVLNLAVVLAIVLTYVGDALRGLLANRKQSILTNFREADQRATEAQNKLREAQLELEQAQAKAQKIREQANVTIEQEKKQFIRQTQEDIKRLGTLQQETLKFEQQKAQNELAEKLVKLALQQVREKLNQRLTSSIHSAVNNFQIVLFTNSKAS.

Residues 24–46 (VLNLAVVLAIVLTYVGDALRGLL) form a helical membrane-spanning segment.

This sequence belongs to the ATPase B chain family. In terms of assembly, F-type ATPases have 2 components, F(1) - the catalytic core - and F(0) - the membrane proton channel. F(1) has five subunits: alpha(3), beta(3), gamma(1), delta(1), epsilon(1). F(0) has four main subunits: a(1), b(1), b'(1) and c(10-14). The alpha and beta chains form an alternating ring which encloses part of the gamma chain. F(1) is attached to F(0) by a central stalk formed by the gamma and epsilon chains, while a peripheral stalk is formed by the delta, b and b' chains.

It is found in the plastid. The protein localises to the chloroplast thylakoid membrane. Its function is as follows. F(1)F(0) ATP synthase produces ATP from ADP in the presence of a proton or sodium gradient. F-type ATPases consist of two structural domains, F(1) containing the extramembraneous catalytic core and F(0) containing the membrane proton channel, linked together by a central stalk and a peripheral stalk. During catalysis, ATP synthesis in the catalytic domain of F(1) is coupled via a rotary mechanism of the central stalk subunits to proton translocation. Functionally, component of the F(0) channel, it forms part of the peripheral stalk, linking F(1) to F(0). The chain is ATP synthase subunit b, chloroplastic from Chlorella vulgaris (Green alga).